We begin with the raw amino-acid sequence, 797 residues long: Inactive dipeptidyl peptidase 10 (797 aa).

The interval 1–28 (MKQEQQPTPGARATQSQPADQELGSNSP) is disordered. Residues 1 to 34 (MKQEQQPTPGARATQSQPADQELGSNSPPQRNWK) are Cytoplasmic-facing. Residues 35-55 (GIAIALLVILVVCSLITMSVI) traverse the membrane as a helical; Signal-anchor for type II membrane protein segment. At 56–797 (LLTPDELTNS…VLPQEPEEDE (742 aa)) the chain is on the extracellular side. N-linked (GlcNAc...) asparagine glycosylation is found at N64, N91, N112, and N120. Phosphotyrosine occurs at positions 139 and 144. N-linked (GlcNAc...) asparagine glycans are attached at residues N258, N343, N518, and N749.

Belongs to the peptidase S9B family. DPPIV subfamily. As to quaternary structure, may form oligomers. Interacts with KCND1 and KCND2. Post-translationally, N-glycosylation is important for cell surface expression, specially at Asn-258, which is crucial. As to expression, detected in brain cortex (at protein level). Expressed in the brain, predominantly by neurons and not by glia.

Its subcellular location is the cell membrane. Promotes cell surface expression of the potassium channel KCND2. Modulates the activity and gating characteristics of the potassium channel KCND2. Has no dipeptidyl aminopeptidase activity. The sequence is that of Inactive dipeptidyl peptidase 10 (Dpp10) from Mus musculus (Mouse).